The primary structure comprises 1309 residues: DNA repair protein RAD9 (1309 aa).

Over residues 1–19 (MSGQLVQWKSSPDRVTQSA) the composition is skewed to polar residues. The segment at 1–39 (MSGQLVQWKSSPDRVTQSAIKEALHSPLADGDMNEMNVP) is disordered. A phosphoserine mark is found at serine 26, serine 56, and serine 205. Threonine 218 is subject to Phosphothreonine. Serine 248 is subject to Phosphoserine. Positions 280 to 299 (NIGAIEEKNPVKKKSENYSS) are disordered. Basic and acidic residues predominate over residues 284–299 (IEEKNPVKKKSENYSS). A phosphoserine mark is found at serine 312 and serine 315. Residues 342–365 (NSAVSGTPSRNNAEEEMYSSESVN) are disordered. Over residues 343–352 (SAVSGTPSRN) the composition is skewed to polar residues. Position 462 is a phosphoserine (serine 462). Residues threonine 471 and threonine 474 each carry the phosphothreonine modification. The disordered stretch occupies residues 490 to 512 (PETSSPSKNTMSKPSNSSPIPKE). Residues 491–508 (ETSSPSKNTMSKPSNSSP) show a composition bias toward polar residues. The residue at position 568 (serine 568) is a Phosphoserine. 2 disordered regions span residues 636-655 (KGNS…DKQD) and 691-731 (IIQN…NSDL). Residues 642 to 655 (LHDDNKECNSDKQD) are compositionally biased toward basic and acidic residues. Serine 729 bears the Phosphoserine mark. The 129-residue stretch at 994–1122 (RTGNVFDKCI…RIVPHLIYQY (129 aa)) folds into the BRCT domain.

In terms of assembly, physically associates with RAD53.

The protein resides in the nucleus. Essential for cell cycle arrest at the G2 stage following DNA damage by X-irradiation or inactivation of DNA ligase. In Saccharomyces cerevisiae (strain ATCC 204508 / S288c) (Baker's yeast), this protein is DNA repair protein RAD9 (RAD9).